Reading from the N-terminus, the 442-residue chain is Glutamyl-tRNA reductase (442 aa).

Substrate is bound by residues 50 to 53 (TCNR), Ser109, 114 to 116 (EPQ), and Gln120. The Nucleophile role is filled by Cys51. 189 to 194 (GAGEMA) serves as a coordination point for NADP(+).

It belongs to the glutamyl-tRNA reductase family. Homodimer.

It catalyses the reaction (S)-4-amino-5-oxopentanoate + tRNA(Glu) + NADP(+) = L-glutamyl-tRNA(Glu) + NADPH + H(+). It participates in porphyrin-containing compound metabolism; protoporphyrin-IX biosynthesis; 5-aminolevulinate from L-glutamyl-tRNA(Glu): step 1/2. Catalyzes the NADPH-dependent reduction of glutamyl-tRNA(Glu) to glutamate 1-semialdehyde (GSA). The sequence is that of Glutamyl-tRNA reductase from Nitratidesulfovibrio vulgaris (strain DSM 19637 / Miyazaki F) (Desulfovibrio vulgaris).